A 137-amino-acid chain; its full sequence is Acidic phospholipase A2 PL-II (137 aa).

The signal sequence occupies residues 1-17 (AVCVSLLGASSIRPLPL). Cystine bridges form between cysteine 28–cysteine 89, cysteine 44–cysteine 136, cysteine 46–cysteine 62, cysteine 61–cysteine 117, cysteine 68–cysteine 110, cysteine 78–cysteine 103, and cysteine 96–cysteine 108. 3 residues coordinate Ca(2+): tyrosine 45, glycine 47, and glycine 49. Histidine 65 is an active-site residue. Aspartate 66 is a Ca(2+) binding site. The active site involves aspartate 111.

Ca(2+) is required as a cofactor. As to expression, expressed by the venom gland.

Its subcellular location is the secreted. It catalyses the reaction a 1,2-diacyl-sn-glycero-3-phosphocholine + H2O = a 1-acyl-sn-glycero-3-phosphocholine + a fatty acid + H(+). Its function is as follows. Snake venom phospholipase A2 (PLA2) that may act in the hemostasis system of the prey. Exhibits hydrolytic activities, and prefers the anionic micelles (dPPC with deoxycholate) (54 umol/mg/min) to the zwitterionic micelles (dPPC with Triton X-100) (15 umol/mg/min). PLA2 catalyzes the calcium-dependent hydrolysis of the 2-acyl groups in 3-sn-phosphoglycerides. The sequence is that of Acidic phospholipase A2 PL-II from Walterinnesia aegyptia (Desert black snake).